We begin with the raw amino-acid sequence, 2144 residues long: Cadherin EGF LAG seven-pass G-type receptor 2 (2144 aa).

Cadherin domains follow at residues 1–40, 41–146, 147–248, and 253–371; these read EDQV…APQF, LRDS…PPVF, EQDE…PPVL, and ILFN…SPLL. Topologically, residues 1-1605 are extracellular; the sequence is EDQVSYTLAI…GEILPLKTLT (1605 aa). N261, N301, N407, and N437 each carry an N-linked (GlcNAc...) asparagine glycan. Residues 453-511 form the EGF-like 1; calcium-binding domain; sequence DDNICLREPCENYMRCVSVLRFDSSAPFIASSSVLFRPIHPVGGLRCRCPPGFTGDYCE. Intrachain disulfides connect C457–C468, C462–C499, C501–C510, C517–C528, C522–C537, C539–C548, C557–C568, C562–C578, and C580–C590. One can recognise an EGF-like 2; calcium-binding domain in the interval 513–549; that stretch reads EVDLCYSRPCGPHGHCRSREGGYTCLCRDGYTGEHCE. Residues 553–591 form the EGF-like 3; calcium-binding domain; sequence RSGRCTPGVCKNGGTCVNLLVGGFKCDCPSGDFEKPFCQ. Residues 592 to 796 enclose the Laminin G-like 1 domain; it reads VTTRSFPARS…IANNGTVPGC (205 aa). Residues N726 and N790 are each glycosylated (N-linked (GlcNAc...) asparagine). 4 cysteine pairs are disulfide-bonded: C770–C796, C803–C814, C808–C823, and C825–C834. Residues 799 to 835 form the EGF-like 4; calcium-binding domain; the sequence is KKNVCDSNTCHNGGTCVNQWDAFSCECPLGFGGKSCA. Position 816 is a (3R)-3-hydroxyasparagine (N816). The Laminin G-like 2 domain occupies 839–1016; sequence ANPQRFLGSS…GESINVEPGC (178 aa). N966 is a glycosylation site (N-linked (GlcNAc...) asparagine). 14 cysteine pairs are disulfide-bonded: C986-C1016, C1022-C1033, C1027-C1042, C1044-C1053, C1057-C1068, C1062-C1080, C1082-C1091, C1112-C1124, C1114-C1131, C1133-C1146, C1149-C1161, C1151-C1168, C1170-C1179, and C1182-C1194. An EGF-like 5; calcium-binding domain is found at 1018 to 1053; it reads WPDPCDSNPCPTNSYCSNDWDSYSCSCDPGYYGDNC. A (3R)-3-hydroxyasparagine modification is found at N1035. N1052 carries N-linked (GlcNAc...) asparagine glycosylation. The EGF-like 6; calcium-binding domain maps to 1054–1092; that stretch reads TNVCDLNPCEHQSACTRKPSAPHGYICECLPNYLGPYCE. The EGF-like 7; calcium-binding domain maps to 1108–1147; sequence TCGPCNCDVSKGFDPDCNKTSGECHCKENHYRPPSSPTCL. N1125 carries N-linked (GlcNAc...) asparagine glycosylation. The Laminin EGF-like domain occupies 1149–1196; it reads CDCYPTGSLSRVCDPEDGQCPCKPGVIGRQCDRCDNPFAEVTTNGCEV. N-linked (GlcNAc...) asparagine glycosylation is found at N1249, N1268, and N1286. Residues 1424–1594 form the GAIN-B domain; sequence ETTVILPESV…AVLMDVSRRE (171 aa). Positions 1439–1466 are disordered; sequence PMVRSAGPGEAQETEELARRQRRHPELS. Disulfide bonds link C1544-C1576 and C1564-C1578. The segment at 1544–1594 is GPS; it reads CVFWNHSILVSGTGGWSARGCEVVFRNESHVSCQCNHMTSFAVLMDVSRRE. 2 N-linked (GlcNAc...) asparagine glycosylation sites follow: N1548 and N1570. Residues 1606–1626 traverse the membrane as a helical segment; sequence YVALGVTLAALMITFLFLTLL. Over 1627 to 1641 the chain is Cytoplasmic; sequence RALRSNQHGIRRNLT. The helical transmembrane segment at 1642–1662 threads the bilayer; that stretch reads AALGLAQLVFLLGINQADLPF. A topological domain (extracellular) is located at residue A1663. A helical transmembrane segment spans residues 1664-1684; the sequence is CTVIAILLHFLYLCTFSWALL. At 1685–1705 the chain is on the cytoplasmic side; sequence EALHLYRALTEVRDVNASPMR. The chain crosses the membrane as a helical span at residues 1706–1726; the sequence is FYYMLGWGVPAFITGLAVGLD. The Extracellular portion of the chain corresponds to 1727 to 1744; that stretch reads PEGYGNPDFCWLSIYDTL. Residues 1745–1765 form a helical membrane-spanning segment; the sequence is IWSFAGPVAFAVSMSVFLYIL. Residues 1766–1789 are Cytoplasmic-facing; it reads SARASCAAQRQGFEKKGPVSGLRS. The chain crosses the membrane as a helical span at residues 1790-1810; it reads SFTVLLLLSATWLLALLSVNS. At 1811-1816 the chain is on the extracellular side; the sequence is DTLLFH. The chain crosses the membrane as a helical span at residues 1817–1837; it reads YLFAACNCVQGPFIFLSYVVL. Residues 1838-2144 lie on the Cytoplasmic side of the membrane; sequence SKEVRKALKF…SEFLFFNFLH (307 aa). The tract at residues 1914–2109 is disordered; that stretch reads TLNPGQVPPG…PPRPPPRQSL (196 aa). Over residues 1943 to 1955 the composition is skewed to acidic residues; sequence TDSDSDLSLEDDQ. The segment covering 2016–2025 has biased composition (polar residues); the sequence is GTTTKENSGS. Over residues 2028–2040 the composition is skewed to basic and acidic residues; that stretch reads LEERPRENGDALT. Residues 2082–2095 show a composition bias toward polar residues; it reads GTGSSRGSTASEGS.

Belongs to the G-protein coupled receptor 2 family. LN-TM7 subfamily. In terms of assembly, heterodimer of 2 chains generated by proteolytic processing; the large extracellular N-terminal fragment and the membrane-bound C-terminal fragment predominantly remain associated and non-covalently linked. The iron and 2-oxoglutarate dependent 3-hydroxylation of aspartate and asparagine is (R) stereospecific within EGF domains. In terms of processing, autoproteolytically processed at the GPS region of the GAIN-B domain; this cleavage modulates receptor activity. As to expression, expressed in the brain. High expression in cerebellum and olfactory bulb. Weaker expression in cerebral cortex, hippocampus and brain stem.

Its subcellular location is the cell membrane. Functionally, receptor that may have an important role in cell/cell signaling during nervous system formation. The polypeptide is Cadherin EGF LAG seven-pass G-type receptor 2 (Rattus norvegicus (Rat)).